Here is a 1462-residue protein sequence, read N- to C-terminus: Gag-Pro-Pol polyprotein (1462 aa).

Gly2 is lipidated: N-myristoyl glycine; by host. The disordered stretch occupies residues 93–142 (QIPSRPAPPPPSSSTHDPPDSDPQIPPPYVEPTAPQVLPVMHPHGAPPNH). At Ser105 the chain carries Phosphoserine; by host MAPK1. The PPXY motif motif lies at 118–121 (PPPY). The short motif at 124-127 (PTAP) is the PTAP/PSAP motif element. 2 CCHC-type zinc fingers span residues 355 to 372 (QPCFRCGKAGHWSRDCTQ) and 378 to 395 (GPCPLCQDPTHWKRDCPR). Residues 476-554 (IEALLDTGAD…NNWAIIGRDA (79 aa)) form the Peptidase A2 domain. The active-site Protease; shared with dimeric partner is Asp481. The 191-residue stretch at 614–804 (LEAGHIEPYT…GTIKFLGQII (191 aa)) folds into the Reverse transcriptase domain. Mg(2+) is bound by residues Asp680, Asp755, Asp756, Asp1040, Glu1074, Asp1096, Asp1157, Asp1230, and Asp1287. The RNase H type-1 domain maps to 1031 to 1165 (INTAPCLFSD…TDALLITPVL (135 aa)). The region spanning 1219–1388 (RGLLPNHIWQ…QPIPETHSLS (170 aa)) is the Integrase catalytic domain. Residues 1393–1443 (HWYYFKLPGLNSRQWKGPQEALQEAAGAALIPVSASSAQWIPWRLLKRAAC) constitute a DNA-binding region (integrase-type).

Homodimer; the homodimers are part of the immature particles. Interacts with human TSG101 and NEDD4; these interactions are essential for budding and release of viral particles. In terms of assembly, homodimer; further assembles as homohexamers. Requires Mg(2+) as cofactor. Post-translationally, phosphorylation of the matrix protein p19 by MAPK1 seems to play a role in budding. Myristoylated. Myristoylation of the matrix (MA) domain mediates the transport and binding of Gag polyproteins to the host plasma membrane and is required for the assembly of viral particles. In terms of processing, specific enzymatic cleavages by the viral protease yield mature proteins. The polyprotein is cleaved during and after budding, this process is termed maturation. The protease is autoproteolytically processed at its N- and C-termini.

The protein localises to the virion. It catalyses the reaction Endonucleolytic cleavage to 5'-phosphomonoester.. It carries out the reaction DNA(n) + a 2'-deoxyribonucleoside 5'-triphosphate = DNA(n+1) + diphosphate. The matrix domain targets Gag, Gag-Pro and Gag-Pro-Pol polyproteins to the plasma membrane via a multipartite membrane binding signal, that includes its myristoylated N-terminus. Its function is as follows. Matrix protein. In terms of biological role, forms the spherical core of the virus that encapsulates the genomic RNA-nucleocapsid complex. Functionally, binds strongly to viral nucleic acids and promote their aggregation. Also destabilizes the nucleic acids duplexes via highly structured zinc-binding motifs. The aspartyl protease mediates proteolytic cleavages of Gag and Gag-Pol polyproteins during or shortly after the release of the virion from the plasma membrane. Cleavages take place as an ordered, step-wise cascade to yield mature proteins. This process is called maturation. Displays maximal activity during the budding process just prior to particle release from the cell (Potential). Cleaves the translation initiation factor eIF4G leading to the inhibition of host cap-dependent translation. Its function is as follows. RT is a multifunctional enzyme that converts the viral RNA genome into dsDNA in the cytoplasm, shortly after virus entry into the cell. This enzyme displays a DNA polymerase activity that can copy either DNA or RNA templates, and a ribonuclease H (RNase H) activity that cleaves the RNA strand of RNA-DNA heteroduplexes in a partially processive 3' to 5'-endonucleasic mode. Conversion of viral genomic RNA into dsDNA requires many steps. A tRNA-Pro binds to the primer-binding site (PBS) situated at the 5'-end of the viral RNA. RT uses the 3' end of the tRNA primer to perform a short round of RNA-dependent minus-strand DNA synthesis. The reading proceeds through the U5 region and ends after the repeated (R) region which is present at both ends of viral RNA. The portion of the RNA-DNA heteroduplex is digested by the RNase H, resulting in a ssDNA product attached to the tRNA primer. This ssDNA/tRNA hybridizes with the identical R region situated at the 3' end of viral RNA. This template exchange, known as minus-strand DNA strong stop transfer, can be either intra- or intermolecular. RT uses the 3' end of this newly synthesized short ssDNA to perform the RNA-dependent minus-strand DNA synthesis of the whole template. RNase H digests the RNA template except for a polypurine tract (PPT) situated at the 5' end of the genome. It is not clear if both polymerase and RNase H activities are simultaneous. RNase H probably can proceed both in a polymerase-dependent (RNA cut into small fragments by the same RT performing DNA synthesis) and a polymerase-independent mode (cleavage of remaining RNA fragments by free RTs). Secondly, RT performs DNA-directed plus-strand DNA synthesis using the PPT that has not been removed by RNase H as primer. PPT and tRNA primers are then removed by RNase H. The 3' and 5' ssDNA PBS regions hybridize to form a circular dsDNA intermediate. Strand displacement synthesis by RT to the PBS and PPT ends produces a blunt ended, linear dsDNA copy of the viral genome that includes long terminal repeats (LTRs) at both ends. In terms of biological role, catalyzes viral DNA integration into the host chromosome, by performing a series of DNA cutting and joining reactions. The chain is Gag-Pro-Pol polyprotein (gag-pro-pol) from Human T-cell leukemia virus 1 (isolate Caribbea HS-35 subtype A) (HTLV-1).